Consider the following 399-residue polypeptide: Elongation factor Tu (399 aa).

The tr-type G domain occupies 10-204 (KPHVNIGTIG…AVDTSIPEPE (195 aa)). Positions 19–26 (GHVDHGKT) are G1. Position 19–26 (19–26 (GHVDHGKT)) interacts with GTP. Threonine 26 serves as a coordination point for Mg(2+). The tract at residues 60-64 (GITIN) is G2. Positions 81-84 (DCPG) are G3. Residues 81–85 (DCPGH) and 136–139 (NKCD) contribute to the GTP site. A G4 region spans residues 136-139 (NKCD). Residues 174–176 (SGL) form a G5 region.

It belongs to the TRAFAC class translation factor GTPase superfamily. Classic translation factor GTPase family. EF-Tu/EF-1A subfamily. In terms of assembly, monomer.

It localises to the cytoplasm. The catalysed reaction is GTP + H2O = GDP + phosphate + H(+). GTP hydrolase that promotes the GTP-dependent binding of aminoacyl-tRNA to the A-site of ribosomes during protein biosynthesis. The chain is Elongation factor Tu from Prochlorococcus marinus (strain MIT 9303).